The following is a 240-amino-acid chain: Ribonuclease 3 (240 aa).

Residues 13–143 (DHASLLEALG…LLGAVHLQHG (131 aa)) form the RNase III domain. Mg(2+) is bound at residue glutamate 53. Aspartate 57 is an active-site residue. The Mg(2+) site is built by aspartate 129 and glutamate 132. Glutamate 132 is a catalytic residue. The region spanning 170-238 (DWKTSLQELT…AGAAYQALTA (69 aa)) is the DRBM domain.

The protein belongs to the ribonuclease III family. In terms of assembly, homodimer. Requires Mg(2+) as cofactor.

It localises to the cytoplasm. The enzyme catalyses Endonucleolytic cleavage to 5'-phosphomonoester.. Digests double-stranded RNA. Involved in the processing of primary rRNA transcript to yield the immediate precursors to the large and small rRNAs (23S and 16S). Processes some mRNAs, and tRNAs when they are encoded in the rRNA operon. Processes pre-crRNA and tracrRNA of type II CRISPR loci if present in the organism. The protein is Ribonuclease 3 of Nocardia farcinica (strain IFM 10152).